The sequence spans 147 residues: D-aminoacyl-tRNA deacylase (147 aa).

Positions 136 to 137 (GP) match the Gly-cisPro motif, important for rejection of L-amino acids motif.

The protein belongs to the DTD family. As to quaternary structure, homodimer.

The protein localises to the cytoplasm. The enzyme catalyses glycyl-tRNA(Ala) + H2O = tRNA(Ala) + glycine + H(+). It catalyses the reaction a D-aminoacyl-tRNA + H2O = a tRNA + a D-alpha-amino acid + H(+). Its function is as follows. An aminoacyl-tRNA editing enzyme that deacylates mischarged D-aminoacyl-tRNAs. Also deacylates mischarged glycyl-tRNA(Ala), protecting cells against glycine mischarging by AlaRS. Acts via tRNA-based rather than protein-based catalysis; rejects L-amino acids rather than detecting D-amino acids in the active site. By recycling D-aminoacyl-tRNA to D-amino acids and free tRNA molecules, this enzyme counteracts the toxicity associated with the formation of D-aminoacyl-tRNA entities in vivo and helps enforce protein L-homochirality. This Nitratiruptor sp. (strain SB155-2) protein is D-aminoacyl-tRNA deacylase.